A 131-amino-acid chain; its full sequence is Prefoldin subunit beta (131 aa).

Disordered regions lie at residues leucine 19–glutamate 41 and leucine 112–alanine 131. Over residues glutamine 20 to threonine 35 the composition is skewed to low complexity. A compositionally biased stretch (gly residues) spans glycine 114–alanine 131.

This sequence belongs to the prefoldin subunit beta family. In terms of assembly, heterohexamer of two alpha and four beta subunits.

The protein localises to the cytoplasm. Its function is as follows. Molecular chaperone capable of stabilizing a range of proteins. Seems to fulfill an ATP-independent, HSP70-like function in archaeal de novo protein folding. The chain is Prefoldin subunit beta from Natronomonas pharaonis (strain ATCC 35678 / DSM 2160 / CIP 103997 / JCM 8858 / NBRC 14720 / NCIMB 2260 / Gabara) (Halobacterium pharaonis).